The sequence spans 297 residues: Urease accessory protein UreD (297 aa).

Over residues Met-1–Ser-18 the composition is skewed to low complexity. 2 disordered regions span residues Met-1–Thr-20 and Val-178–Arg-201.

This sequence belongs to the UreD family. In terms of assembly, ureD, UreF and UreG form a complex that acts as a GTP-hydrolysis-dependent molecular chaperone, activating the urease apoprotein by helping to assemble the nickel containing metallocenter of UreC. The UreE protein probably delivers the nickel.

The protein resides in the cytoplasm. Required for maturation of urease via the functional incorporation of the urease nickel metallocenter. The protein is Urease accessory protein UreD of Parafrankia sp. (strain EAN1pec).